Here is a 69-residue protein sequence, read N- to C-terminus: A-kinase anchor protein inhibitor 1 (69 aa).

A disordered region spans residues 39 to 69; the sequence is QESLRREGRPGDSRAWGQLGGCELTKKHEKK. A compositionally biased stretch (basic and acidic residues) spans 41 to 50; it reads SLRREGRPGD.

In terms of assembly, binds cAMP-dependent protein kinase (PKA). Interacts specifically with RII-regulatory subunits of PKA (PRKAR2A and PRKAR2B). As to expression, preferentially expressed in the neural tissues.

Protein kinase A (PKA)-binding protein. Binds to type II regulatory subunits of protein kinase A (PKA) and may block the A-kinase anchoring protein (AKAP)-mediated subcellular localization of PKA. The chain is A-kinase anchor protein inhibitor 1 from Mus musculus (Mouse).